The chain runs to 206 residues: Large ribosomal subunit protein uL4 (206 aa).

Residues 51–76 (AKTRAEVSGGGIKPWRQKGTGRARQG) form a disordered region.

Belongs to the universal ribosomal protein uL4 family. In terms of assembly, part of the 50S ribosomal subunit.

Functionally, one of the primary rRNA binding proteins, this protein initially binds near the 5'-end of the 23S rRNA. It is important during the early stages of 50S assembly. It makes multiple contacts with different domains of the 23S rRNA in the assembled 50S subunit and ribosome. In terms of biological role, forms part of the polypeptide exit tunnel. This chain is Large ribosomal subunit protein uL4, found in Clostridium kluyveri (strain ATCC 8527 / DSM 555 / NBRC 12016 / NCIMB 10680 / K1).